Reading from the N-terminus, the 379-residue chain is Putative glutamate--cysteine ligase 2 (379 aa).

The protein belongs to the glutamate--cysteine ligase type 2 family. YbdK subfamily.

It carries out the reaction L-cysteine + L-glutamate + ATP = gamma-L-glutamyl-L-cysteine + ADP + phosphate + H(+). ATP-dependent carboxylate-amine ligase which exhibits weak glutamate--cysteine ligase activity. The sequence is that of Putative glutamate--cysteine ligase 2 from Mycobacterium avium (strain 104).